Reading from the N-terminus, the 438-residue chain is UPF0229 protein R01398 (438 aa).

Positions 55–107 (PARGVNEPAFQPDSNSGERRHVLPGNREFAAGDRIPKRGSGGGAGNAGAGTGQ) are disordered. Gly residues predominate over residues 93-105 (GSGGGAGNAGAGT).

Belongs to the UPF0229 family.

The polypeptide is UPF0229 protein R01398 (Rhizobium meliloti (strain 1021) (Ensifer meliloti)).